Consider the following 267-residue polypeptide: Tryptophan synthase alpha chain (267 aa).

Residues Glu-49 and Asp-60 each act as proton acceptor in the active site.

The protein belongs to the TrpA family. In terms of assembly, tetramer of two alpha and two beta chains.

It carries out the reaction (1S,2R)-1-C-(indol-3-yl)glycerol 3-phosphate + L-serine = D-glyceraldehyde 3-phosphate + L-tryptophan + H2O. Its pathway is amino-acid biosynthesis; L-tryptophan biosynthesis; L-tryptophan from chorismate: step 5/5. In terms of biological role, the alpha subunit is responsible for the aldol cleavage of indoleglycerol phosphate to indole and glyceraldehyde 3-phosphate. The protein is Tryptophan synthase alpha chain of Salinispora arenicola (strain CNS-205).